The following is a 320-amino-acid chain: MTSAPLAARLRDVAGPLFFPVTAFGPDGAVDLAVFRAHVRAGIDAGAAAVFACCGTGEFHALTPEEFRLAVGAAVEESAGQVPVLAGAGYGTALAVQYARAAEEAGADGLLAMPPYLVVADQQGLLHHYAALAAATGLETIVYQRDNAVFTPETVVALARTPGVIGLKDGHGDLDLMQRIVSAVRTHRPGGDFLYFNGLPTAELTGPAYRGIGVTLYSSAVFAFAPDIALAFYRALDSGDDALVDGLLDHFYRPLVELRAQGRGYAVSLVKAGVRLQGLDVGEVRTPLTEPTAAHVKDLIEIIASGRALLAEHAAAGGGA.

The protein belongs to the DapA family.

It carries out the reaction 5-dehydro-4-deoxy-D-glucarate + H(+) = 2,5-dioxopentanoate + CO2 + H2O. Its pathway is carbohydrate acid metabolism; D-glucarate degradation; 2,5-dioxopentanoate from D-glucarate: step 2/2. This Streptomyces griseus subsp. griseus (strain JCM 4626 / CBS 651.72 / NBRC 13350 / KCC S-0626 / ISP 5235) protein is Probable 5-dehydro-4-deoxyglucarate dehydratase.